Here is a 332-residue protein sequence, read N- to C-terminus: Cytoplasmic phosphatidylinositol transfer protein 1 (332 aa).

Phosphoserine is present on residues Ser-119, Ser-270, and Ser-274. Over residues 267-285 (SVRSAPSSAPSTPLSTDAP) the composition is skewed to low complexity. The interval 267–332 (SVRSAPSSAP…SDKPCRPKSE (66 aa)) is disordered. Thr-278 carries the post-translational modification Phosphothreonine. Residues 322-332 (SSDKPCRPKSE) show a composition bias toward basic and acidic residues.

Belongs to the PtdIns transfer protein family. PI transfer class IIB subfamily. As to expression, ubiquitously expressed.

The protein resides in the cytoplasm. It catalyses the reaction a 1,2-diacyl-sn-glycero-3-phospho-(1D-myo-inositol)(in) = a 1,2-diacyl-sn-glycero-3-phospho-(1D-myo-inositol)(out). The catalysed reaction is a 1,2-diacyl-sn-glycero-3-phosphate(in) = a 1,2-diacyl-sn-glycero-3-phosphate(out). Functionally, catalyzes the transfer of phosphatidylinositol (PI) and phosphatidic acid (PA) between membranes. Binds PA derived from the phospholipase D signaling pathway and among the cellular PA species, preferably binds to the C16:0/16:1 and C16:1/18:1 PA species. In terms of biological role, catalyzes the transfer of phosphatidylinositol between membranes. This is Cytoplasmic phosphatidylinositol transfer protein 1 (PITPNC1) from Homo sapiens (Human).